Consider the following 711-residue polypeptide: Mitochondrial intermediate peptidase (711 aa).

Residues 1-33 constitute a mitochondrion transit peptide; the sequence is MLLAAGARYARRLCGRGAAAALQGRTGRSCARD. Lys-124 carries the N6-acetyllysine modification. His-493 provides a ligand contact to Zn(2+). Glu-494 is a catalytic residue. Zn(2+)-binding residues include His-497 and His-500.

The protein belongs to the peptidase M3 family. As to quaternary structure, monomer. Requires Zn(2+) as cofactor.

The protein resides in the mitochondrion matrix. The enzyme catalyses Release of an N-terminal octapeptide as second stage of processing of some proteins imported into the mitochondrion.. Activity is divalent cation-dependent. It is stimulated by manganese, magnesium or calcium ions and reversibly inhibited by zinc, cobalt and iron. Functionally, cleaves proteins, imported into the mitochondrion, to their mature size. The protein is Mitochondrial intermediate peptidase (Mipep) of Mus musculus (Mouse).